A 252-amino-acid polypeptide reads, in one-letter code: Probable transcriptional regulatory protein Caur_1043 (252 aa).

The segment covering 1-14 has biased composition (basic residues); the sequence is MSGHSKWHTIRRTK. The segment at 1–22 is disordered; it reads MSGHSKWHTIRRTKGVNDQRRG.

Belongs to the TACO1 family.

Its subcellular location is the cytoplasm. The sequence is that of Probable transcriptional regulatory protein Caur_1043 from Chloroflexus aurantiacus (strain ATCC 29366 / DSM 635 / J-10-fl).